The primary structure comprises 342 residues: Ketol-acid reductoisomerase (NADP(+)) (342 aa).

Residues 2–181 (VKVYYNGDIK…GGARAGVLET (180 aa)) form the KARI N-terminal Rossmann domain. Residues 25 to 28 (YGSQ), Arg48, Ser52, and 82 to 85 (DEQQ) each bind NADP(+). His107 is a catalytic residue. Gly133 lines the NADP(+) pocket. The KARI C-terminal knotted domain maps to 182–327 (TFKEETETDL…RKLREMMPFV (146 aa)). Mg(2+) is bound by residues Asp190, Glu194, Glu226, and Glu230. Residue Ser251 participates in substrate binding.

Belongs to the ketol-acid reductoisomerase family. It depends on Mg(2+) as a cofactor.

The catalysed reaction is (2R)-2,3-dihydroxy-3-methylbutanoate + NADP(+) = (2S)-2-acetolactate + NADPH + H(+). It catalyses the reaction (2R,3R)-2,3-dihydroxy-3-methylpentanoate + NADP(+) = (S)-2-ethyl-2-hydroxy-3-oxobutanoate + NADPH + H(+). It participates in amino-acid biosynthesis; L-isoleucine biosynthesis; L-isoleucine from 2-oxobutanoate: step 2/4. The protein operates within amino-acid biosynthesis; L-valine biosynthesis; L-valine from pyruvate: step 2/4. Functionally, involved in the biosynthesis of branched-chain amino acids (BCAA). Catalyzes an alkyl-migration followed by a ketol-acid reduction of (S)-2-acetolactate (S2AL) to yield (R)-2,3-dihydroxy-isovalerate. In the isomerase reaction, S2AL is rearranged via a Mg-dependent methyl migration to produce 3-hydroxy-3-methyl-2-ketobutyrate (HMKB). In the reductase reaction, this 2-ketoacid undergoes a metal-dependent reduction by NADPH to yield (R)-2,3-dihydroxy-isovalerate. In Bacillus licheniformis (strain ATCC 14580 / DSM 13 / JCM 2505 / CCUG 7422 / NBRC 12200 / NCIMB 9375 / NCTC 10341 / NRRL NRS-1264 / Gibson 46), this protein is Ketol-acid reductoisomerase (NADP(+)).